Consider the following 696-residue polypeptide: DNA topoisomerase 6 subunit B (696 aa).

A disordered region spans residues 1–36 (MDDDAGDGAASGGTKRKVTAASSSAAAKGKAAGKGK). Residues 20–36 (AASSSAAAKGKAAGKGK) show a composition bias toward low complexity. ATP contacts are provided by residues N88, D187, 208–209 (TK), 217–224 (GKFGLGAK), and K543.

Belongs to the TOP6B family. As to quaternary structure, homodimer. Heterotetramer of two TOP6A and two TOP6B subunits. Interacts with SPO11-2 and TOP6A3. In terms of tissue distribution, highly expressed in flowers before pollination. Expressed in roots and shoots.

It is found in the nucleus. It carries out the reaction ATP-dependent breakage, passage and rejoining of double-stranded DNA.. In terms of biological role, component of the DNA topoisomerase VI involved in chromatin organization and progression of endoreduplication cycles. Relaxes both positive and negative superturns and exhibits a strong decatenase activity. The B subunit binds ATP. May be involved in cell proliferation and stress tolerance. This is DNA topoisomerase 6 subunit B from Oryza sativa subsp. indica (Rice).